Reading from the N-terminus, the 547-residue chain is TBCC domain-containing protein 1 (547 aa).

In terms of domain architecture, C-CAP/cofactor C-like spans 304–435 (PHTHRMVVMS…LEDHMAQTGL (132 aa)).

It belongs to the TBCC family.

The protein resides in the cytoplasm. The protein localises to the cytoskeleton. It is found in the microtubule organizing center. Its subcellular location is the centrosome. It localises to the spindle pole. May play a role in the regulation of centrosome and Golgi apparatus positioning. This chain is TBCC domain-containing protein 1 (tbccd1), found in Xenopus laevis (African clawed frog).